Reading from the N-terminus, the 225-residue chain is uncharacterized protein (225 aa).

The next 4 helical transmembrane spans lie at 40–60 (LISL…LSIV), 63–83 (LAFF…PFSF), 151–171 (LSET…LTIL), and 176–196 (IFSL…IVSL).

The protein resides in the membrane. This is an uncharacterized protein from Saccharomyces cerevisiae (strain ATCC 204508 / S288c) (Baker's yeast).